The chain runs to 179 residues: Dual-action ribosomal maturation protein DarP (179 aa).

It belongs to the DarP family.

Its subcellular location is the cytoplasm. Member of a network of 50S ribosomal subunit biogenesis factors which assembles along the 30S-50S interface, preventing incorrect 23S rRNA structures from forming. Promotes peptidyl transferase center (PTC) maturation. The protein is Dual-action ribosomal maturation protein DarP of Photorhabdus laumondii subsp. laumondii (strain DSM 15139 / CIP 105565 / TT01) (Photorhabdus luminescens subsp. laumondii).